Here is a 547-residue protein sequence, read N- to C-terminus: NADH-ubiquinone oxidoreductase chain 5 (547 aa).

Helical transmembrane passes span 3–23 (ISIFLMVFLLFCVSLFLIFFV), 45–65 (YFNSIMFSLILLLVTISVLVF), 80–100 (YFMLLVFVGSMFSLIFSSGCF), 101–121 (SMLVSWDLLGISSFFLVLFYN), 132–152 (TVLTNRLGDFFLFVFFSSTIF), 198–218 (ISSLVHSSTLVTAGLVLIMNF), 227–247 (VIMIIMVVGVFTMFFSSMAAL), 264–284 (MGFSMLTVGIGLSFVSFIHLL), 319–339 (VPYFIQLQLLVTLFCLCGLVF), 352–372 (FFFSNFFMVVFACMFFFSVFL), 399–419 (VVMNFLSLLLVLFSIFFIWWM), 430–450 (FLYVDFFVPLFFVVMIMVVGF), 460–477 (FVYKFLVDFFAKGWVYGL), 485–505 (LFLGGINSLGVTFFSFTGFWS), and 512–532 (LYFNSVVIVLVLFFFLVWGCI).

Belongs to the complex I subunit 5 family.

The protein resides in the mitochondrion inner membrane. It carries out the reaction a ubiquinone + NADH + 5 H(+)(in) = a ubiquinol + NAD(+) + 4 H(+)(out). Its function is as follows. Core subunit of the mitochondrial membrane respiratory chain NADH dehydrogenase (Complex I) that is believed to belong to the minimal assembly required for catalysis. Complex I functions in the transfer of electrons from NADH to the respiratory chain. The immediate electron acceptor for the enzyme is believed to be ubiquinone. This Ascaris suum (Pig roundworm) protein is NADH-ubiquinone oxidoreductase chain 5 (ND5).